We begin with the raw amino-acid sequence, 350 residues long: MKNVLVYCRQGFEKDCAAELSEVASSKGFYGYAKVVPDAGYIVYNFDQADAGETLIQQLNFNRLIFARQIIAVNDVIELEQGGRVESLLEAARELPLAEEIWIETADTNDAKALSGLIKKLEKPLREGWKRSGVLRNKAVGVRHHVFMLDGEAAYLGVSYAACRSEFPMGIRRLRFPAAGPSRSTLKLEEAFLQFVPEQTLEADLTEGMTAVDLGAAPGGWTYQFVKKGINVIAIDNGPMQKELMSTGLVEHEKADGFKYEPPYTVDWLVCDMVERPIKVAELMAKWLASGWTRRAIFNLKLPMKKRYQEVTLCLQTMEGLLRKAGVSYQYQVKHLYHDREEVTVCIMVK.

S-adenosyl-L-methionine contacts are provided by residues serine 184, 217-220, aspartate 236, aspartate 256, and aspartate 272; that span reads APGG. Lysine 301 (proton acceptor) is an active-site residue.

The protein belongs to the class I-like SAM-binding methyltransferase superfamily. RNA methyltransferase RlmE family. RlmM subfamily. In terms of assembly, monomer.

It is found in the cytoplasm. It catalyses the reaction cytidine(2498) in 23S rRNA + S-adenosyl-L-methionine = 2'-O-methylcytidine(2498) in 23S rRNA + S-adenosyl-L-homocysteine + H(+). Catalyzes the 2'-O-methylation at nucleotide C2498 in 23S rRNA. The protein is Ribosomal RNA large subunit methyltransferase M of Marinomonas sp. (strain MWYL1).